The chain runs to 915 residues: Protein translocase subunit SecA (915 aa).

ATP contacts are provided by residues Gln87, 105–109 (GEGKT), and Asp512. Residues 849 to 864 (AAQQQARQAPLPNAPA) are compositionally biased toward low complexity. Residues 849-915 (AAQQQARQAP…CHGSRAKDHA (67 aa)) are disordered. The segment covering 876 to 891 (PEEKVARVAAERHIGR) has biased composition (basic and acidic residues). Zn(2+) is bound by residues Cys895, Cys897, Cys906, and His907.

It belongs to the SecA family. As to quaternary structure, monomer and homodimer. Part of the essential Sec protein translocation apparatus which comprises SecA, SecYEG and auxiliary proteins SecDF-YajC and YidC. Requires Zn(2+) as cofactor.

It is found in the cell inner membrane. Its subcellular location is the cytoplasm. It catalyses the reaction ATP + H2O + cellular proteinSide 1 = ADP + phosphate + cellular proteinSide 2.. Its function is as follows. Part of the Sec protein translocase complex. Interacts with the SecYEG preprotein conducting channel. Has a central role in coupling the hydrolysis of ATP to the transfer of proteins into and across the cell membrane, serving both as a receptor for the preprotein-SecB complex and as an ATP-driven molecular motor driving the stepwise translocation of polypeptide chains across the membrane. The protein is Protein translocase subunit SecA of Actinobacillus succinogenes (strain ATCC 55618 / DSM 22257 / CCUG 43843 / 130Z).